The sequence spans 182 residues: Meiotic recombination protein REC104 (182 aa).

Interacts with REC114 and SPO11.

Functionally, potential transcriptional regulator that is required to activate expression of a number of early meiotic genes including HOP1. This is Meiotic recombination protein REC104 (REC104) from Saccharomyces cerevisiae (strain ATCC 204508 / S288c) (Baker's yeast).